The following is a 117-amino-acid chain: NADH-ubiquinone oxidoreductase chain 3 (117 aa).

Helical transmembrane passes span 1–21, 58–78, and 86–106; these read MLML…VMML, FLIA…LPMI, and LMNW…GLYH.

It belongs to the complex I subunit 3 family.

Its subcellular location is the mitochondrion membrane. It carries out the reaction a ubiquinone + NADH + 5 H(+)(in) = a ubiquinol + NAD(+) + 4 H(+)(out). Core subunit of the mitochondrial membrane respiratory chain NADH dehydrogenase (Complex I) that is believed to belong to the minimal assembly required for catalysis. Complex I functions in the transfer of electrons from NADH to the respiratory chain. The immediate electron acceptor for the enzyme is believed to be ubiquinone. The polypeptide is NADH-ubiquinone oxidoreductase chain 3 (mt:ND3) (Anopheles gambiae (African malaria mosquito)).